The chain runs to 104 residues: N(4)-acetylcytidine amidohydrolase (104 aa).

One can recognise an ASCH domain in the interval methionine 7–isoleucine 93. Lysine 22 functions as the Proton acceptor in the catalytic mechanism. Threonine 25 (nucleophile) is an active-site residue. Glutamate 75 (proton donor) is an active-site residue.

The protein belongs to the N(4)-acetylcytidine amidohydrolase family.

It carries out the reaction N(4)-acetylcytidine + H2O = cytidine + acetate + H(+). The catalysed reaction is N(4)-acetyl-2'-deoxycytidine + H2O = 2'-deoxycytidine + acetate + H(+). The enzyme catalyses N(4)-acetylcytosine + H2O = cytosine + acetate + H(+). Functionally, catalyzes the hydrolysis of N(4)-acetylcytidine (ac4C). This Vibrio vulnificus (strain YJ016) protein is N(4)-acetylcytidine amidohydrolase.